The primary structure comprises 123 residues: Venom protein 29 (123 aa).

The first 18 residues, methionine 1 to glycine 18, serve as a signal peptide directing secretion.

In terms of processing, contains 3 disulfide bonds. As to expression, expressed by the venom gland.

It localises to the secreted. The protein is Venom protein 29 of Lychas mucronatus (Chinese swimming scorpion).